A 507-amino-acid polypeptide reads, in one-letter code: MIVLLVSLVLAGCIYYANARRVRRSRLPPGPPGIPLPFIGNMFDMPSESPWLRFLQWGRDYHTDILYLNAGGTEIIILNTLDAITDLLEKRGSMYSGRLESTMVNELMGWEFDLGFITYGERWREERRMFAKEFSEKNIRQFRHAQIKAANQLVRQLIKTPDRWSQHIRHQIAAMSLDIGYGIDLAEDDPWIAATQLANEGLAEASVPGSFWVDSFPALKYLPSWLPGAGFKRKAKVWKEGADHMVNMPYETMKKLTVQGLARPSYASARLQAMDPDGDLEHQEHVIRNTATEVNVGGGDTTVSAVSAFILAMVKYPEVQRQVQAELDALTSKGVVPNYDEEDDSLPYLTACVKEIFRWNQIAPLAIPHRLIKDDVYRGYLIPKNALVYANSWAVLNDPEEYPNPSEFRPERYLSSDGKPDPTVRDPRKAAFGYGRRNCPGIHLAQSTVWIAGATLLSVFNIERPVDGNGKPIDIPATFTTGFFRHPEPFQCRFVPRTQEILKSVSG.

The signal sequence occupies residues 1–19 (MIVLLVSLVLAGCIYYANA). Residues 403 to 425 (PNPSEFRPERYLSSDGKPDPTVR) form a disordered region. Over residues 408-425 (FRPERYLSSDGKPDPTVR) the composition is skewed to basic and acidic residues. Cysteine 439 is a binding site for heme.

The protein belongs to the cytochrome P450 family. Heme serves as cofactor.

It catalyses the reaction tryptamine + AH2 + O2 = 4-hydroxytryptamine + A + H2O. It functions in the pathway secondary metabolite biosynthesis. In terms of biological role, tryptamine 4-monooxygenase; part of the gene cluster that mediates the biosynthesis of psilocybin, a psychotropic tryptamine-derived natural product. The first step in the pathway is the decarboxylation of L-tryptophan to tryptamine by the decarboxylase psiD. PsiD does not decarboxylate phenylalanine, tyrosine, or 5-hydroxy- L -tryptophan (5-HTP). 4-hydroxy-L-tryptophan is accepted as substrate by psiD as well. The cytochrome P450 monooxygenase psiH then converts tryptamine to 4-hydroxytryptamine. The kinase psiK catalyzes the 4-O-phosphorylation step by converting 4-hydroxytryptamine into norbaeocystin. The methyltransferase psiM then catalyzes iterative methyl transfer to the amino group of norbaeocystin to yield psilocybin via a monomethylated intermediate, baeocystin. In Psilocybe cyanescens, this protein is Tryptamine 4-monooxygenase.